Consider the following 505-residue polypeptide: SusD-like protein P2 (505 aa).

The N-terminal stretch at 1 to 17 (MKKYKITFIVLLLTLVG) is a signal peptide. Cys-18 carries N-palmitoyl cysteine lipidation. Cys-18 carries S-diacylglycerol cysteine lipidation.

This sequence belongs to the SusD family.

It is found in the cell outer membrane. Polysaccharide-binding protein probably involved in ulvan degradation. Ulvan is the main polysaccharide component of the Ulvales (green seaweed) cell wall. It is composed of disaccharide building blocks comprising 3-sulfated rhamnose (Rha3S) linked to D-glucuronic acid (GlcA), L-iduronic acid (IduA), or D-xylose (Xyl). The SusD-like protein may mediate ulvan oligomer-binding before transport in the periplasm for further degradation. This Formosa agariphila (strain DSM 15362 / KCTC 12365 / LMG 23005 / KMM 3901 / M-2Alg 35-1) protein is SusD-like protein P2.